A 597-amino-acid chain; its full sequence is Proline--tRNA ligase (597 aa).

The protein belongs to the class-II aminoacyl-tRNA synthetase family. ProS type 1 subfamily. In terms of assembly, homodimer.

Its subcellular location is the cytoplasm. It catalyses the reaction tRNA(Pro) + L-proline + ATP = L-prolyl-tRNA(Pro) + AMP + diphosphate. Catalyzes the attachment of proline to tRNA(Pro) in a two-step reaction: proline is first activated by ATP to form Pro-AMP and then transferred to the acceptor end of tRNA(Pro). As ProRS can inadvertently accommodate and process non-cognate amino acids such as alanine and cysteine, to avoid such errors it has two additional distinct editing activities against alanine. One activity is designated as 'pretransfer' editing and involves the tRNA(Pro)-independent hydrolysis of activated Ala-AMP. The other activity is designated 'posttransfer' editing and involves deacylation of mischarged Ala-tRNA(Pro). The misacylated Cys-tRNA(Pro) is not edited by ProRS. The chain is Proline--tRNA ligase from Bifidobacterium longum (strain NCC 2705).